We begin with the raw amino-acid sequence, 229 residues long: tRNA pseudouridine synthase B (229 aa).

Catalysis depends on D52, which acts as the Nucleophile.

The protein belongs to the pseudouridine synthase TruB family. Type 1 subfamily.

The enzyme catalyses uridine(55) in tRNA = pseudouridine(55) in tRNA. Functionally, responsible for synthesis of pseudouridine from uracil-55 in the psi GC loop of transfer RNAs. The sequence is that of tRNA pseudouridine synthase B from Flavobacterium johnsoniae (strain ATCC 17061 / DSM 2064 / JCM 8514 / BCRC 14874 / CCUG 350202 / NBRC 14942 / NCIMB 11054 / UW101) (Cytophaga johnsonae).